A 56-amino-acid polypeptide reads, in one-letter code: Keratin-associated protein 20-1 (56 aa).

Belongs to the KRTAP type 20 family. Interacts with hair keratins.

Functionally, in the hair cortex, hair keratin intermediate filaments are embedded in an interfilamentous matrix, consisting of hair keratin-associated proteins (KRTAP), which are essential for the formation of a rigid and resistant hair shaft through their extensive disulfide bond cross-linking with abundant cysteine residues of hair keratins. The matrix proteins include the high-sulfur and high-glycine-tyrosine keratins. In Homo sapiens (Human), this protein is Keratin-associated protein 20-1 (KRTAP20-1).